The following is a 533-amino-acid chain: MKRDHHHHHHQDKKTMMMNEEDDGNGMDELLAVLGYKVRSSEMADVAQKLEQLEVMMSNVQEDDLSQLATETVHYNPAELYTWLDSMLTDLNPPSSNAEYDLKAIPGDAILNQFAIDSASSSNQGGGGDTYTTNKRLKCSNGVVETTTATAESTRHVVLVDSQENGVRLVHALLACAEAVQKENLTVAEALVKQIGFLAVSQIGAMRKVATYFAEALARRIYRLSPSQSPIDHSLSDTLQMHFYETCPYLKFAHFTANQAILEAFQGKKRVHVIDFSMSQGLQWPALMQALALRPGGPPVFRLTGIGPPAPDNFDYLHEVGCKLAHLAEAIHVEFEYRGFVANTLADLDASMLELRPSEIESVAVNSVFELHKLLGRPGAIDKVLGVVNQIKPEIFTVVEQESNHNSPIFLDRFTESLHYYSTLFDSLEGVPSGQDKVMSEVYLGKQICNVVACDGPDRVERHETLSQWRNRFGSAGFAAAHIGSNAFKQASMLLALFNGGEGYRVEESDGCLMLGWHTRPLIATSAWKLSTN.

Basic residues predominate over residues 1 to 12 (MKRDHHHHHHQD). The interval 1 to 24 (MKRDHHHHHHQDKKTMMMNEEDDG) is disordered. The DELLA motif signature appears at 28–32 (DELLA). Residues 50-54 (LEQLE) carry the LEXLE motif motif. Positions 73–77 (VHYNP) match the VHYNP motif motif. The GRAS domain maps to 160–529 (VDSQENGVRL…RPLIATSAWK (370 aa)). Positions 167-221 (VRLVHALLACAEAVQKENLTVAEALVKQIGFLAVSQIGAMRKVATYFAEALARRI) are leucine repeat I (LRI). Residues 174–178 (LACAE) carry the LxCxE motif motif. Positions 240–305 (QMHFYETCPY…GGPPVFRLTG (66 aa)) are VHIID. The short motif at 271–275 (VHVID) is the VHIID element. The segment at 319-351 (EVGCKLAHLAEAIHVEFEYRGFVANTLADLDAS) is leucine repeat II (LRII). Residues 363–450 (VAVNSVFELH…EVYLGKQICN (88 aa)) are PFYRE. An LXXLL motif motif is present at residues 371–375 (LHKLL). The segment at 453-529 (ACDGPDRVER…RPLIATSAWK (77 aa)) is SAW.

Belongs to the GRAS family. DELLA subfamily. As to quaternary structure, interacts directly with the GID2/SLY1 component of the SCF(GID2) complex. Interacts (via N-terminus) with GID1A, GID1B and GID1B (via N-terminus). Interacts with the BOI proteins BOI, BRG1, BRG2, BRG3 and NUP58. Interacts with TOPP4. Interacts with TCP14 and TCP15. Interacts with FLZ5. Binds to and coactivates GAF1/IDD2 and ENY/IDD1 at the promoter of GA20OX2 gene. Binds to PDF2 and ATML1. Interacts with the prefoldin alpha subunits PFD3 and PFD5 in the nucleus. Phosphorylated. Post-translationally, gibberellin (GA) induces dephosphorylation of GAI by TOPP4 and subsequent degradation by the proteasomal pathway. In terms of processing, may be ubiquitinated, as suggested by its interaction with GID2. Ubiquitination is however unsure since in contrast to other DELLA proteins, it is not ubiquitinated and degraded upon GA application. Nevertheless, ubiquitination may be triggered by other processes. As to expression, ubiquitously expressed. Expressed in rosette leaves, roots, stems and inflorescences of greenhouse grown.

Its subcellular location is the nucleus. Transcription activation is repressed by gibberellic acid GA(3) in the presence of TPR4. In terms of biological role, transcriptional regulator that acts as a repressor of the gibberellin (GA) signaling pathway. Transcription coactivator of the zinc finger transcription factors GAF1/IDD2 and ENY/IDD1 in regulation of gibberellin homeostasis and signaling. No effect of the BOI proteins on its stability. Probably acts by participating in large multiprotein complexes that repress transcription of GA-inducible genes. Positively regulates XERICO expression. In contrast to RGA, it is less sensitive to GA. Its activity is probably regulated by other phytohormones such as auxin and ethylene. Involved in the regulation of seed dormancy and germination, including glucose-induced delay of seed germination. Involved in the process leading to microtubules (MTs) dissociation in response to gibberellic acid (GA) probably by mediating the translocation of the prefoldin co-chaperone complex from the cytoplasm to the nucleus. In Arabidopsis thaliana (Mouse-ear cress), this protein is DELLA protein GAI.